A 357-amino-acid chain; its full sequence is Acyl-coenzyme A diphosphatase NUDT19 (357 aa).

The Nudix hydrolase domain maps to 10–242 (AATVMLAAGW…IWLAPPQFYE (233 aa)). Residues 72–93 (PRFGLGPEPPRQPPFPGLSHGD) are disordered. Residues 78–87 (PEPPRQPPFP) are compositionally biased toward pro residues. Residues 97–118 (AALPDDVALRICAIREAFEEAG) carry the Nudix box motif. E112 and E116 together coordinate Mg(2+). K300 is modified (N6-succinyllysine). A Microbody targeting signal motif is present at residues 355-357 (AHL).

This sequence belongs to the Nudix hydrolase family. Monomer. Requires Mg(2+) as cofactor. Mn(2+) is required as a cofactor. As to expression, highly expressed in the kidneys, with lower levels in skeletal muscle and brain (at protein level).

It localises to the peroxisome. The enzyme catalyses an acyl-CoA + H2O = an acyl-4'-phosphopantetheine + adenosine 3',5'-bisphosphate + 2 H(+). It carries out the reaction CoA + H2O = (R)-4'-phosphopantetheine + adenosine 3',5'-bisphosphate + 2 H(+). The catalysed reaction is hexanoyl-CoA + H2O = hexanoyl-4'-phosphopantetheine + adenosine 3',5'-bisphosphate + 2 H(+). It catalyses the reaction octanoyl-CoA + H2O = S-octanoyl-4'-phosphopantetheine + adenosine 3',5'-bisphosphate + 2 H(+). The enzyme catalyses butanoyl-CoA + H2O = S-butanoyl-4'-phosphopantetheine + adenosine 3',5'-bisphosphate + 2 H(+). It carries out the reaction propanoyl-CoA + H2O = propanoyl-4'-phosphopantetheine + adenosine 3',5'-bisphosphate + 2 H(+). The catalysed reaction is malonyl-CoA + H2O = malonyl-4'-phosphopantetheine + adenosine 3',5'-bisphosphate + 2 H(+). It catalyses the reaction succinyl-CoA + H2O = succinyl-4'-phosphopantetheine + adenosine 3',5'-bisphosphate + 2 H(+). The enzyme catalyses choloyl-CoA + H2O = S-choloyl-4'-phosphopantetheine + adenosine 3',5'-bisphosphate + 2 H(+). It carries out the reaction 4,8-dimethylnonanoyl-CoA + H2O = S-(4,8-dimethylnonanoyl)-4'-phosphopantetheine + adenosine 3',5'-bisphosphate + 2 H(+). The catalysed reaction is (9Z,12Z,15Z)-octadecatrienoyl-CoA + H2O = S-(9Z,12Z,15Z-octadecatrienoyl)-4'-phosphopantetheine + adenosine 3',5'-bisphosphate + 2 H(+). It catalyses the reaction (9Z,12Z)-octadecadienoyl-CoA + H2O = S-(9Z,12Z-octadecadienoyl)-4'-phosphopantetheine + adenosine 3',5'-bisphosphate + 2 H(+). The enzyme catalyses (9Z)-hexadecenoyl-CoA + H2O = S-(9Z-hexadecenoyl)-4'-phosphopantetheine + adenosine 3',5'-bisphosphate + 2 H(+). It carries out the reaction (9Z)-tetradecenoyl-CoA + H2O = S-(9Z-tetradecenoyl)-4'-phosphopantetheine + adenosine 3',5'-bisphosphate + 2 H(+). The catalysed reaction is (6Z)-octenoyl-CoA + H2O = S-(6Z-octenoyl)-4'-phosphopantetheine + adenosine 3',5'-bisphosphate + 2 H(+). It catalyses the reaction hexadecanoyl-CoA + H2O = S-hexadecanoyl-4'-phosphopantetheine + adenosine 3',5'-bisphosphate + 2 H(+). The enzyme catalyses tetradecanoyl-CoA + H2O = tetradecanoyl-4'-phosphopantetheine + adenosine 3',5'-bisphosphate + 2 H(+). It carries out the reaction dodecanoyl-CoA + H2O = S-dodecanoyl-4'-phosphopantetheine + adenosine 3',5'-bisphosphate + 2 H(+). The catalysed reaction is a 5'-end CoA-ribonucleoside in mRNA + H2O = a 5'-end phospho-adenosine-phospho-ribonucleoside in mRNA + (R)-4'-phosphopantetheine + 2 H(+). With respect to regulation, inhibited by chenodeoxycholic acid (CDCA) and its conjugated derivatives, taurochenodeoxycholic acid and glycochenodeoxycholic acid. Inhibited by fluoride. In terms of biological role, fatty acyl-coenzyme A (CoA) diphosphatase that hydrolyzes fatty acyl-CoA to yield acyl-4'-phosphopantetheine and adenosine 3',5'-bisphosphate. Mediates the hydrolysis of a wide range of CoA esters, including choloyl-CoA and branched-chain fatty-acyl-CoA esters and at low substrate concentrations medium and long-chain fatty-acyl-CoA esters are the primary substrates. Highest activity seen with medium-chain acyl-CoA esters and higher rates of activity seen with the unsaturated acyl-CoA esters compared with the saturated esters. Exhibits decapping activity towards dpCoA-capped RNAs in vitro. The polypeptide is Acyl-coenzyme A diphosphatase NUDT19 (Nudt19) (Mus musculus (Mouse)).